A 271-amino-acid chain; its full sequence is Exosome complex component Rrp42 (271 aa).

The protein belongs to the RNase PH family. Rrp42 subfamily. Component of the archaeal exosome complex. Forms a hexameric ring-like arrangement composed of 3 Rrp41-Rrp42 heterodimers. The hexameric ring associates with a trimer of Rrp4 and/or Csl4 subunits.

It localises to the cytoplasm. Functionally, non-catalytic component of the exosome, which is a complex involved in RNA degradation. Contributes to the structuring of the Rrp41 active site. This Methanothermobacter thermautotrophicus (strain ATCC 29096 / DSM 1053 / JCM 10044 / NBRC 100330 / Delta H) (Methanobacterium thermoautotrophicum) protein is Exosome complex component Rrp42.